The following is a 324-amino-acid chain: UPF0158 protein CPn_0518/CP_0235/CPj0518/CpB0539 (324 aa).

It belongs to the UPF0158 family.

The chain is UPF0158 protein CPn_0518/CP_0235/CPj0518/CpB0539 from Chlamydia pneumoniae (Chlamydophila pneumoniae).